Reading from the N-terminus, the 198-residue chain is Ciliary neurotrophic factor (198 aa).

Belongs to the CNTF family. Nervous system.

The protein resides in the cytoplasm. In terms of biological role, CNTF is a survival factor for various neuronal cell types. Seems to prevent the degeneration of motor axons after axotomy. This chain is Ciliary neurotrophic factor (Cntf), found in Mus musculus (Mouse).